The sequence spans 262 residues: MYLLIVFLSMLSSSVAGFFGRFLGSESVSRFNLIIFLILLVFSICLFRSLKQYLGKRMTQWCYLALVCQISLFLVLLRSHILAGFGTFSADVFTVFMGTFSVTGSSGGIVNHQDGASSEWFTYTSDMVEDSASSGRTSSSVNQPIPEEQAWEREARAQEHDRISAEVETITSACENLEAAMVRKAQILLHQRGVTLGDPEDVKRALQLALHDDWEHAIDDRKRHFTVLRRNFGTARCERWNPFIDELRGLGNHQVNARHYVD.

Helical transmembrane passes span 4-24 (LIVF…RFLG), 28-48 (VSRF…CLFR), and 62-82 (CYLA…SHIL). Residues 152–181 (EREARAQEHDRISAEVETITSACENLEAAM) are a coiled coil.

It is found in the mitochondrion membrane. This is an uncharacterized protein from Arabidopsis thaliana (Mouse-ear cress).